Reading from the N-terminus, the 369-residue chain is Transaldolase (369 aa).

Residue K140 is the Schiff-base intermediate with substrate of the active site.

Belongs to the transaldolase family. Type 2 subfamily.

It localises to the cytoplasm. It carries out the reaction D-sedoheptulose 7-phosphate + D-glyceraldehyde 3-phosphate = D-erythrose 4-phosphate + beta-D-fructose 6-phosphate. It functions in the pathway carbohydrate degradation; pentose phosphate pathway; D-glyceraldehyde 3-phosphate and beta-D-fructose 6-phosphate from D-ribose 5-phosphate and D-xylulose 5-phosphate (non-oxidative stage): step 2/3. In terms of biological role, transaldolase is important for the balance of metabolites in the pentose-phosphate pathway. The polypeptide is Transaldolase (Parafrankia sp. (strain EAN1pec)).